The chain runs to 2090 residues: Nuclear pore complex protein Nup214 (2090 aa).

The residue at position 2 (glycine 2) is an N-acetylglycine. Phosphoserine is present on serine 30. Blade repeat units lie at residues 41–93 (LLAV…PMKF), 94–150 (PIHH…DAGG), 151–193 (MVID…PSTV), 194–239 (AVTS…ESDH), 240–303 (PVRV…ERQH), 304–359 (HYYL…KSDD), and 360–404 (SLPM…FYMI). The tract at residues 41-404 (LLAVSNKYGL…DGVLCPFYMI (364 aa)) is seven-bladed beta propeller. The segment at 236 to 1418 (ESDHPVRVLD…AVFGSLPVTS (1183 aa)) is 44 X 2 AA repeats of F-G. Phosphothreonine is present on threonine 416. A phosphoserine mark is found at serine 421, serine 430, and serine 433. The tract at residues 422–460 (LEGERQPKSPGSTPTTPTSSQAPQKLDASAAAAPASLPP) is disordered. The segment covering 429–441 (KSPGSTPTTPTSS) has biased composition (low complexity). Threonine 434, threonine 437, and threonine 439 each carry phosphothreonine. Residues 450-586 (SAAAAPASLP…PPSTSAVKVN (137 aa)) are (Microbial infection) Binds human adenovirus 5 (HAdV-5) protein L3 (hexon). The tract at residues 481 to 2076 (VFSFGSSSLK…GSGTGGFSFG (1596 aa)) is 11 X 5 AA approximate repeats. Copy 1 of the repeat occupies 484–485 (FG). Low complexity-rich tracts occupy residues 489-513 (LKSS…KAAP) and 524-536 (PPSK…TPAA). The segment at 489–536 (LKSSATVTGEPPSYSSGSDSSKAAPGPGPSTFSFVPPSKASLAPTPAA) is disordered. Copy 2 of the repeat occupies 548 to 549 (FG). Low complexity-rich tracts occupy residues 597-629 (STPV…HPTP) and 637-658 (VPLK…SSSP). The tract at residues 597–700 (STPVSSSQSA…KQGHQWKDSD (104 aa)) is disordered. Residues serine 651, serine 657, and serine 666 each carry the phosphoserine modification. Residue threonine 670 is modified to Phosphothreonine. Serine 678 carries the phosphoserine modification. The stretch at 680–1209 (QAKSLQPAVA…VTSTPSASGQ (530 aa)) forms a coiled coil. Basic and acidic residues predominate over residues 691–700 (KQGHQWKDSD). Leucine-zipper regions lie at residues 740–768 (LRTE…ISSL) and 861–882 (LANN…VDSL). The residue at position 760 (serine 760) is a Phosphoserine. Phosphoserine occurs at positions 940, 970, 974, and 989. The segment at 987 to 1009 (TSSVSQSLESEDARTSCKDDEAV) is disordered. The span at 997–1007 (EDARTSCKDDE) shows a compositional bias: basic and acidic residues. Position 1021 is a phosphothreonine (threonine 1021). Serine 1023, serine 1045, serine 1056, and serine 1081 each carry phosphoserine. Residues 1128 to 1149 (LKNNPATPSTAMGSSVPYSTAK) are compositionally biased toward polar residues. Residues 1128 to 1152 (LKNNPATPSTAMGSSVPYSTAKTPH) are disordered. Threonine 1134, threonine 1150, and threonine 1156 each carry phosphothreonine. 2 stretches are compositionally biased toward polar residues: residues 1168 to 1188 (LINS…SSGD) and 1199 to 1213 (AVTS…FSKP). The segment at 1168–1213 (LINSLKPSGPTPASGQLSSGDKASGTAKIETAVTSTPSASGQFSKP) is disordered. Phosphoserine is present on serine 1181. Repeat unit 3 spans residues 1225 to 1226 (FG). 2 stretches are compositionally biased toward polar residues: residues 1234–1254 (SNFT…QPDA) and 1273–1285 (PPSG…NTTP). 2 disordered regions span residues 1234–1316 (SNFT…PPSK) and 1337–1408 (LRVG…TSST). Over residues 1288–1299 (PAASSSRPVAPS) the composition is skewed to low complexity. Positions 1301 to 1310 (TALSTTSSKL) are enriched in polar residues. Residue threonine 1312 is modified to Phosphothreonine. Residues 1347–1368 (KPTNKASSTSLTSTQPTKTSGV) show a composition bias toward polar residues. A Phosphoserine modification is found at serine 1353. Residues 1386 to 1408 (PPVTSSATTTSVAPPAATSTSST) show a composition bias toward low complexity. The 18 X 4 AA approximate repeats stretch occupies residues 1409–2084 (AVFGSLPVTS…FGSNNSSVQG (676 aa)). 4 tandem repeats follow at residues 1411–1412 (FG), 1427–1428 (FG), 1441–1442 (FG), and 1473–1474 (FG). An 11 X 3 AA approximate repeats region spans residues 1427-2085 (FGGTSLSAGK…GSNNSSVQGF (659 aa)). A compositionally biased stretch (polar residues) spans 1438-1450 (SFSFGSQQTNSTV). A disordered region spans residues 1438–1467 (SFSFGSQQTNSTVPPSAPPPTTAATPLPTS). Composition is skewed to low complexity over residues 1479–1489 (SATTPSLPMSA) and 1508–1527 (SEVS…AQLP). Residues 1479 to 1539 (SATTPSLPMS…PPQTSDSVKK (61 aa)) form a disordered region. Residue lysine 1538 forms a Glycyl lysine isopeptide (Lys-Gly) (interchain with G-Cter in SUMO2) linkage. 18 tandem repeats follow at residues 1635-1636 (FG), 1674-1675 (FG), 1686-1687 (FG), 1713-1714 (FG), 1721-1722 (FG), 1726-1727 (FG), 1732-1733 (FG), 1756-1757 (FG), 1772-1773 (FG), 1786-1787 (FG), 1798-1799 (FG), 1806-1807 (FG), 1812-1813 (FG), 1819-1820 (FG), 1842-1843 (FG), 1851-1852 (FG), 1862-1863 (FG), and 1874-1875 (FG). A disordered region spans residues 1884–1903 (GFFSGLGGKPSQDAANKNPF). A run of 5 repeats spans residues 1910–1911 (FG), 1922–1923 (FG), 1930–1931 (FG), 1938–1939 (FG), and 1959–1960 (FG). Phosphoserine is present on serine 1963. 3 repeat units span residues 1970–1971 (FG), 1976–1977 (FG), and 1982–1983 (FG). Position 1985 is a phosphoserine (serine 1985). Tandem repeats lie at residues 1988–1989 (FG), 1994–1995 (FG), 2012–2013 (FG), 2024–2025 (FG), 2026–2027 (FG), 2035–2036 (FG), 2046–2047 (FG), 2056–2057 (FG), 2066–2067 (FG), 2075–2076 (FG), and 2085–2086 (FG).

As to quaternary structure, homodimer. Part of the nuclear pore complex (NPC). Interacts with NUP88. Interacts with ZFP36; this interaction increases upon lipopolysaccharide (LPS) stimulation. Interacts with DDX19. Interacts with XPO1. Interacts with XPO5. (Microbial infection) Interacts with human herpes virus 1 (HHV-1) protein UL25; this interaction might be essential to the capsid docking onto the host nuclear pore. In terms of assembly, (Microbial infection) Interacts (via N-terminus) with human adenovirus 5 (HAdV-5) protein L3 (hexon); this interaction might be essential for the release of the virus genome to the nucleus. Post-translationally, probably glycosylated as it reacts with wheat germ agglutinin (WGA). As to expression, expressed in thymus, spleen, bone marrow, kidney, brain and testis, but hardly in all other tissues or in whole embryos during development.

It localises to the nucleus. The protein resides in the nuclear pore complex. Functionally, part of the nuclear pore complex. Has a critical role in nucleocytoplasmic transport. May serve as a docking site in the receptor-mediated import of substrates across the nuclear pore complex. In terms of biological role, (Microbial infection) Required for capsid disassembly of the human adenovirus 5 (HadV-5) leading to release of the viral genome to the nucleus (in vitro). The protein is Nuclear pore complex protein Nup214 (NUP214) of Homo sapiens (Human).